The primary structure comprises 126 residues: Holo-[acyl-carrier-protein] synthase (126 aa).

The Mg(2+) site is built by Asp-9 and Glu-59.

This sequence belongs to the P-Pant transferase superfamily. AcpS family. Requires Mg(2+) as cofactor.

The protein localises to the cytoplasm. It carries out the reaction apo-[ACP] + CoA = holo-[ACP] + adenosine 3',5'-bisphosphate + H(+). Functionally, transfers the 4'-phosphopantetheine moiety from coenzyme A to a Ser of acyl-carrier-protein. The sequence is that of Holo-[acyl-carrier-protein] synthase from Myxococcus xanthus (strain DK1622).